Consider the following 373-residue polypeptide: Phospho-N-acetylmuramoyl-pentapeptide-transferase (373 aa).

A run of 10 helical transmembrane segments spans residues 34–54 (GALFTSALIVFLFGPRIISSL), 78–98 (TPTMGGLMILAGIVVSSLLWA), 100–120 (LANVYVVATLLVTLGFGAIGF), 141–161 (LGLEFIIAAIAVYFMMNTALS), 181–201 (FMLNLGMFFVLFGAFVIVSAG), 212–232 (GLAIVPVMIAAASFGVIAYLA), 252–272 (LAVVLGAVIGAGLGFLWFNAP), 275–295 (AIFMGDTGSLALGGLIGTVAV), 301–321 (IVMAIIGGLFVLEALSVIIQV), and 350–370 (QVVVRFWIVAVILAMIGLSTL).

It belongs to the glycosyltransferase 4 family. MraY subfamily. It depends on Mg(2+) as a cofactor.

Its subcellular location is the cell inner membrane. It carries out the reaction UDP-N-acetyl-alpha-D-muramoyl-L-alanyl-gamma-D-glutamyl-meso-2,6-diaminopimeloyl-D-alanyl-D-alanine + di-trans,octa-cis-undecaprenyl phosphate = di-trans,octa-cis-undecaprenyl diphospho-N-acetyl-alpha-D-muramoyl-L-alanyl-D-glutamyl-meso-2,6-diaminopimeloyl-D-alanyl-D-alanine + UMP. The protein operates within cell wall biogenesis; peptidoglycan biosynthesis. Functionally, catalyzes the initial step of the lipid cycle reactions in the biosynthesis of the cell wall peptidoglycan: transfers peptidoglycan precursor phospho-MurNAc-pentapeptide from UDP-MurNAc-pentapeptide onto the lipid carrier undecaprenyl phosphate, yielding undecaprenyl-pyrophosphoryl-MurNAc-pentapeptide, known as lipid I. The polypeptide is Phospho-N-acetylmuramoyl-pentapeptide-transferase (Rhizobium rhizogenes (strain K84 / ATCC BAA-868) (Agrobacterium radiobacter)).